The following is a 218-amino-acid chain: Ependymin (218 aa).

The signal sequence occupies residues 1–20 (MHTVKLLCVVFSCLCAVAWG). Asparagine 74 and asparagine 97 each carry an N-linked (GlcNAc...) asparagine glycan.

It belongs to the ependymin family. As to quaternary structure, forms disulfide-linked dimers. Binds calcium through the terminal sialic acids.

It is found in the secreted. In terms of biological role, may play a role in neural plasticity. May be involved during axon regeneration. The polypeptide is Ependymin (epd) (Devario aequipinnatus (Giant danio)).